A 97-amino-acid polypeptide reads, in one-letter code: Large ribosomal subunit protein bL28 (97 aa).

The protein belongs to the bacterial ribosomal protein bL28 family.

This chain is Large ribosomal subunit protein bL28, found in Rickettsia peacockii (strain Rustic).